A 106-amino-acid polypeptide reads, in one-letter code: Flagellar transcriptional regulator FlhD (106 aa).

Belongs to the FlhD family. As to quaternary structure, homodimer; disulfide-linked. Forms a heterohexamer composed of two FlhC and four FlhD subunits. Each FlhC binds a FlhD dimer, forming a heterotrimer, and a hexamer assembles by dimerization of two heterotrimers.

It localises to the cytoplasm. In terms of biological role, functions in complex with FlhC as a master transcriptional regulator that regulates transcription of several flagellar and non-flagellar operons by binding to their promoter region. Activates expression of class 2 flagellar genes, including fliA, which is a flagellum-specific sigma factor that turns on the class 3 genes. Also regulates genes whose products function in a variety of physiological pathways. This is Flagellar transcriptional regulator FlhD from Burkholderia pseudomallei (strain 1710b).